A 386-amino-acid polypeptide reads, in one-letter code: Succinate--CoA ligase [ADP-forming] subunit beta (386 aa).

The region spanning Lys-9–Glu-244 is the ATP-grasp domain. Residues Lys-46, Gly-53–Gly-55, Glu-99, Ala-102, and Glu-107 contribute to the ATP site. Mg(2+)-binding residues include Asn-199 and Asp-213. Residues Asn-264 and Gly-321–Met-323 contribute to the substrate site.

Belongs to the succinate/malate CoA ligase beta subunit family. Heterotetramer of two alpha and two beta subunits. It depends on Mg(2+) as a cofactor.

It carries out the reaction succinate + ATP + CoA = succinyl-CoA + ADP + phosphate. It catalyses the reaction GTP + succinate + CoA = succinyl-CoA + GDP + phosphate. The protein operates within carbohydrate metabolism; tricarboxylic acid cycle; succinate from succinyl-CoA (ligase route): step 1/1. In terms of biological role, succinyl-CoA synthetase functions in the citric acid cycle (TCA), coupling the hydrolysis of succinyl-CoA to the synthesis of either ATP or GTP and thus represents the only step of substrate-level phosphorylation in the TCA. The beta subunit provides nucleotide specificity of the enzyme and binds the substrate succinate, while the binding sites for coenzyme A and phosphate are found in the alpha subunit. In Bordetella petrii (strain ATCC BAA-461 / DSM 12804 / CCUG 43448), this protein is Succinate--CoA ligase [ADP-forming] subunit beta.